The sequence spans 343 residues: MMEVEGSMNRAPDQSSFLRSRRSKALYQFKQQKLPACKPVLTPISVITVFMLMGFVFIPIGLITLRASRDAIEIIDRYDVECIPEEYRTNKLLYITDSSIPKNCTRYLKVQKYMKAPIFIYYQLDNYYQNHRRYVKSRSDQQLLHGLEYSHTSSCEPEESSNGLPIVPCGLIAWSMFNDTFTFSRERTKLNVSRNNIAWKSDREHKFGKNVYPINFQNGTLIGGAKLDPKIPLSDQEDFIVWMRAAALLSFRKLYGRIEEDLEPGKVVEVNLMNNYNTYSFSGQKKLILSTSNWLGGRNDFLGITYLVVGSSSIVISIIFMLLHLKNPRPYGDNSWNKKSLSS.

Residues 43 to 63 (PISVITVFMLMGFVFIPIGLI) traverse the membrane as a helical segment. 4 N-linked (GlcNAc...) asparagine glycosylation sites follow: N103, N178, N191, and N218. Residues 301-321 (FLGITYLVVGSSSIVISIIFM) traverse the membrane as a helical segment.

Belongs to the CDC50/LEM3 family. In terms of tissue distribution, expressed in roots, leaves, stems, flowers and siliques.

The protein resides in the membrane. The polypeptide is Putative ALA-interacting subunit 2 (ALIS2) (Arabidopsis thaliana (Mouse-ear cress)).